Reading from the N-terminus, the 84-residue chain is Putative membrane protein insertion efficiency factor (84 aa).

It belongs to the UPF0161 family.

It is found in the cell inner membrane. Its function is as follows. Could be involved in insertion of integral membrane proteins into the membrane. The chain is Putative membrane protein insertion efficiency factor from Shewanella frigidimarina (strain NCIMB 400).